Consider the following 180-residue polypeptide: Acireductone dioxygenase (180 aa).

Residues His-99, His-101, Glu-105, and His-145 each contribute to the Fe(2+) site. Ni(2+)-binding residues include His-99, His-101, Glu-105, and His-145.

Belongs to the acireductone dioxygenase (ARD) family. As to quaternary structure, monomer. Fe(2+) is required as a cofactor. It depends on Ni(2+) as a cofactor.

The enzyme catalyses 1,2-dihydroxy-5-(methylsulfanyl)pent-1-en-3-one + O2 = 3-(methylsulfanyl)propanoate + CO + formate + 2 H(+). It catalyses the reaction 1,2-dihydroxy-5-(methylsulfanyl)pent-1-en-3-one + O2 = 4-methylsulfanyl-2-oxobutanoate + formate + 2 H(+). The protein operates within amino-acid biosynthesis; L-methionine biosynthesis via salvage pathway; L-methionine from S-methyl-5-thio-alpha-D-ribose 1-phosphate: step 5/6. In terms of biological role, catalyzes 2 different reactions between oxygen and the acireductone 1,2-dihydroxy-3-keto-5-methylthiopentene (DHK-MTPene) depending upon the metal bound in the active site. Fe-containing acireductone dioxygenase (Fe-ARD) produces formate and 2-keto-4-methylthiobutyrate (KMTB), the alpha-ketoacid precursor of methionine in the methionine recycle pathway. Ni-containing acireductone dioxygenase (Ni-ARD) produces methylthiopropionate, carbon monoxide and formate, and does not lie on the methionine recycle pathway. This is Acireductone dioxygenase from Geobacillus kaustophilus (strain HTA426).